A 137-amino-acid chain; its full sequence is Methylglyoxal synthase (137 aa).

The 137-residue stretch at 1–137 (MKIALIAHDK…NLVRGGEPNV (137 aa)) folds into the MGS-like domain. Substrate contacts are provided by residues histidine 8, lysine 12, 34–37 (TGTT), and 54–55 (SG). The active-site Proton donor/acceptor is the aspartate 60. Histidine 87 contacts substrate.

The protein belongs to the methylglyoxal synthase family.

It catalyses the reaction dihydroxyacetone phosphate = methylglyoxal + phosphate. Functionally, catalyzes the formation of methylglyoxal from dihydroxyacetone phosphate. The protein is Methylglyoxal synthase of Bacillus velezensis (strain DSM 23117 / BGSC 10A6 / LMG 26770 / FZB42) (Bacillus amyloliquefaciens subsp. plantarum).